Reading from the N-terminus, the 130-residue chain is MAKMSTDDLLDAFKEMTLLELSDFVKKFEETFEVTAAAPVAVAAAGPAAGGAPAEAAEEQSEFDVILESAGDKKIGVIKVVREIVSGLGLKEAKDLVDGAPKPLLEKVAKEAADDAKAKLEAAGATVTVK.

This sequence belongs to the bacterial ribosomal protein bL12 family. As to quaternary structure, homodimer. Part of the ribosomal stalk of the 50S ribosomal subunit. Forms a multimeric L10(L12)X complex, where L10 forms an elongated spine to which 2 to 4 L12 dimers bind in a sequential fashion. Binds GTP-bound translation factors.

Forms part of the ribosomal stalk which helps the ribosome interact with GTP-bound translation factors. Is thus essential for accurate translation. The sequence is that of Large ribosomal subunit protein bL12 from Mycolicibacterium paratuberculosis (strain ATCC BAA-968 / K-10) (Mycobacterium paratuberculosis).